The primary structure comprises 2104 residues: Myosin type-2 heavy chain 2 (2104 aa).

One can recognise a Myosin N-terminal SH3-like domain in the interval 35-85 (DERTWIWIPDSKESFVKAWIVEDLGEKYRVKLERDGSERIVDGFDAEKVNP). The 679-residue stretch at 89-767 (DMVDDMAALT…VLGSLEDRRN (679 aa)) folds into the Myosin motor domain. An ATP-binding site is contributed by 182–189 (GESGAGKT). Positions 646–660 (LSSLMHQLEATQPHF) are actin-binding. Residues 829–2104 (LGTTQTDEYL…RSNRSPSVLR (1276 aa)) are a coiled coil. Disordered regions lie at residues 1245–1278 (NRSVTQHTLDGNSPHPSFEEKHSGDPLKRIDGNN) and 1398–1426 (MEFTGLKPLSPSKISNLPSSQPGSPSKRS). Polar residues predominate over residues 1246–1259 (RSVTQHTLDGNSPH). Residues 1261-1278 (SFEEKHSGDPLKRIDGNN) are compositionally biased toward basic and acidic residues. Over residues 1409–1424 (SKISNLPSSQPGSPSK) the composition is skewed to polar residues. Residue Ser1421 is modified to Phosphoserine.

This sequence belongs to the TRAFAC class myosin-kinesin ATPase superfamily. Myosin family. As to quaternary structure, binds to cdc4 and rlc1.

In terms of biological role, stabilizes the F-actin cables forming the F-actin ring that surrounds the nucleus during interphase. May work in conjunction with myo2. In Schizosaccharomyces pombe (strain 972 / ATCC 24843) (Fission yeast), this protein is Myosin type-2 heavy chain 2 (myo3).